The sequence spans 712 residues: Protein phosphatase 1 regulatory subunit 37 (712 aa).

Residues 1–12 show a composition bias toward pro residues; the sequence is MEIPPQEAPPGP. The segment at 1–47 is disordered; the sequence is MEIPPQEAPPGPGADADADAEAETEEASAEAESPTGTSPPADGRLKA. Positions 16–29 are enriched in acidic residues; it reads ADADAEAETEEASA. 2 positions are modified to phosphoserine: Ser-56 and Ser-62. LRR repeat units lie at residues 226–246, 254–275, 283–303, 312–332, and 340–360; these read SLAV…MLLA, NLRE…AQLG, SLQI…AYIC, GLVT…AFLG, and SLET…RNLK. Residues 492-680 are disordered; it reads ESGELPAVGS…PPGLEAKGGS (189 aa). Positions 514–531 are enriched in acidic residues; the sequence is SDSDSDSDREEQEEEEED. Ser-583 bears the Phosphoserine mark. Residues 605 to 626 are compositionally biased toward pro residues; sequence PPVPPTFVSSPPPSPPSPPASP. Residues 639–651 are compositionally biased toward polar residues; sequence SEAQPQLEPSQAG.

The protein belongs to the PPP1R37 family. In terms of assembly, interacts with PPP1CA.

In terms of biological role, inhibits phosphatase activity of protein phosphatase 1 (PP1) complexes. This is Protein phosphatase 1 regulatory subunit 37 (Ppp1r37) from Mus musculus (Mouse).